The chain runs to 238 residues: DNA repair protein RecO (238 aa).

This sequence belongs to the RecO family.

Involved in DNA repair and RecF pathway recombination. The chain is DNA repair protein RecO from Hahella chejuensis (strain KCTC 2396).